A 565-amino-acid polypeptide reads, in one-letter code: Sensor histidine kinase YpdA (565 aa).

Residues 1–3 (MHE) are Cytoplasmic-facing. Residues 4–24 (IFNMLLAVFDRAALMLICLFF) form a helical membrane-spanning segment. The Periplasmic segment spans residues 25-45 (LIRIRLFRELLHKSAHSPKEL). Residues 46 to 66 (LAVTAIFSLFALFSTWSGVPV) form a helical membrane-spanning segment. Topologically, residues 67–74 (EGSLVNVR) are cytoplasmic. The chain crosses the membrane as a helical span at residues 75–95 (IIAVMSGGILFGPWVGIITGV). At 96-107 (IAGIHRYLIDIG) the chain is on the periplasmic side. Residues 108–128 (GVTAIPCFITSILAGCISGWI) form a helical membrane-spanning segment. At 129–139 (NLKIPKAQRWR) the chain is on the cytoplasmic side. A helical membrane pass occupies residues 140-160 (VGILGGMLCETLTMILVIVWA). Over 161–172 (PTTALGIDIVSK) the chain is Periplasmic. A helical transmembrane segment spans residues 173–193 (IGIPMILGSVCIGFIVLLVQS). At 194–565 (VEGEKEASAA…PVASQATLLL (372 aa)) the chain is on the cytoplasmic side. One can recognise a GAF domain in the interval 223 to 342 (VNSESLRKVC…AVGLSQIIST (120 aa)). One can recognise a Histidine kinase domain in the interval 343–554 (QLEVSRAEQL…EIAFYIPNQR (212 aa)). Position 371 is a phosphohistidine; by autocatalysis (His371).

In terms of assembly, interacts with BtsT and YhjX. In terms of processing, autophosphorylated.

The protein localises to the cell inner membrane. It carries out the reaction ATP + protein L-histidine = ADP + protein N-phospho-L-histidine.. Member of the two-component regulatory system YpdA/YpdB, which is part of a nutrient-sensing regulatory network composed of YpdA/YpdB, the high-affinity pyruvate signaling system BtsS/BtsR and their respective target proteins, YhjX and BtsT. YpdA activates YpdB by phosphorylation in response to high concentrations of extracellular pyruvate. Activation of the YpdA/YpdB signaling cascade also promotes BtsS/BtsR-mediated btsT expression. In Escherichia coli (strain K12), this protein is Sensor histidine kinase YpdA (ypdA).